The primary structure comprises 331 residues: UPF0194 membrane protein YbhG (331 aa).

Residues 1–19 form the signal peptide; the sequence is MKKPVVIGLAIAAIVAVIA. The stretch at 107–208 forms a coiled coil; it reads EEIAQAAAAV…LDLQDTTLIA (102 aa).

Belongs to the UPF0194 family.

The protein resides in the periplasm. The protein is UPF0194 membrane protein YbhG of Salmonella agona (strain SL483).